Here is a 286-residue protein sequence, read N- to C-terminus: Homoserine kinase (286 aa).

78 to 88 is a binding site for ATP; the sequence is PLARGLGSSSS.

This sequence belongs to the GHMP kinase family. Homoserine kinase subfamily.

The protein localises to the cytoplasm. The enzyme catalyses L-homoserine + ATP = O-phospho-L-homoserine + ADP + H(+). Its pathway is amino-acid biosynthesis; L-threonine biosynthesis; L-threonine from L-aspartate: step 4/5. Functionally, catalyzes the ATP-dependent phosphorylation of L-homoserine to L-homoserine phosphate. This chain is Homoserine kinase, found in Streptococcus thermophilus (strain CNRZ 1066).